The primary structure comprises 115 residues: uncharacterized protein (115 aa).

This is an uncharacterized protein from Gallus gallus (Chicken).